Reading from the N-terminus, the 169-residue chain is Desumoylating isopeptidase 1 (169 aa).

Residues 8-150 (HLVRLYVYDM…LGQALRPLLD (143 aa)) enclose the PPPDE domain. His39 is a catalytic residue. Residues 84–92 (IFLEYLSSL) carry the Nuclear export signal 1 motif. The active site involves Cys109. The short motif at 140-154 (PLGQALRPLLDSVQI) is the Nuclear export signal 2 element.

Belongs to the DeSI family. As to quaternary structure, homodimer.

The protein localises to the cytoplasm. It localises to the nucleus. The enzyme catalyses S-hexadecanoyl-L-cysteinyl-[protein] + H2O = L-cysteinyl-[protein] + hexadecanoate + H(+). Its function is as follows. Protease which deconjugates SUMO1, SUMO2 and SUMO3 from some substrate proteins. Has isopeptidase but not SUMO-processing activity. Collaborates with ubqln4 in the export of ubiquitinated proteins from the nucleus to the cytoplasm. Exhibits palmitoyl protein thioesterase (S-depalmitoylation) activity towards synthetic substrates 4-methylumbelliferyl-6-S-palmitoyl-beta-D-glucopyranoside and S-depalmitoylation probe 5 (DPP-5). The protein is Desumoylating isopeptidase 1 of Xenopus laevis (African clawed frog).